A 370-amino-acid chain; its full sequence is 5-hydroxytryptamine receptor 5B (370 aa).

The segment at 1–36 (MEVSNLSGATPGIAFPPGPESCSDSPSSGRSMGSTP) is disordered. Residues 1 to 48 (MEVSNLSGATPGIAFPPGPESCSDSPSSGRSMGSTPGGLILSGREPPF) are Extracellular-facing. N-linked (GlcNAc...) asparagine glycosylation is present at Asn-5. Positions 20–36 (ESCSDSPSSGRSMGSTP) are enriched in low complexity. Residues 49–75 (SAFTVLVVTLLVLLIAATFLWNLLVLV) form a helical membrane-spanning segment. At 76–88 (TILRVRAFHRVPH) the chain is on the cytoplasmic side. The chain crosses the membrane as a helical span at residues 89 to 115 (NLVASTAVSDVLVAALVMPLSLVSELS). The Extracellular segment spans residues 116–127 (AGRRWQLGRSLC). Cys-127 and Cys-205 are oxidised to a cystine. A helical transmembrane segment spans residues 128–150 (HVWISFDVLCCTASIWNVAAIAL). Asp-134 contributes to the serotonin binding site. The Cytoplasmic portion of the chain corresponds to 151–168 (DRYWTITRHLQYTLRTRR). Residues 169–189 (RASALMIAITWALSALIALAP) form a helical membrane-spanning segment. Topologically, residues 190-211 (LLFGWGEAYDARLQRCQVSQEP) are extracellular. The chain crosses the membrane as a helical span at residues 212–233 (SYAVFSTCGAFYVPLAVVLFVY). Residues 234 to 300 (WKIYKAAKFR…QKEKRAAMMV (67 aa)) are Cytoplasmic-facing. The chain crosses the membrane as a helical span at residues 301 to 325 (GILIGVFVLCWIPFFLTELVSPLCA). The Extracellular segment spans residues 326–327 (CS). A helical transmembrane segment spans residues 328–352 (LPPIWKSIFLWLGYSNSFFNPLIYT). Over 353–370 (AFNKNYNNAFKSLFTKQR) the chain is Cytoplasmic.

This sequence belongs to the G-protein coupled receptor 1 family. In terms of tissue distribution, brain; in the CA1 region of hippocampus, the medial habenula, and raphe nuclei.

The protein resides in the cell membrane. In terms of biological role, G-protein coupled receptor for 5-hydroxytryptamine (serotonin), a biogenic hormone that functions as a neurotransmitter, a hormone and a mitogen. Also functions as a receptor for ergot alkaloid derivatives and other psychoactive substances. Ligand binding causes a conformation change that triggers signaling via guanine nucleotide-binding proteins (G proteins) and modulates the activity of downstream effectors. Htr5b is coupled to G(i)/G(o) G alpha proteins and mediates inhibitory neurotransmission: signaling inhibits adenylate cyclase activity and activates a phosphatidylinositol-calcium second messenger system that regulates the release of Ca(2+) ions from intracellular stores. This chain is 5-hydroxytryptamine receptor 5B, found in Rattus norvegicus (Rat).